Reading from the N-terminus, the 273-residue chain is 4-hydroxy-tetrahydrodipicolinate reductase (273 aa).

NAD(+) contacts are provided by residues 12–17 (GAGGRM) and E38. R39 serves as a coordination point for NADP(+). NAD(+)-binding positions include 102–104 (GTT) and 126–129 (AANF). Catalysis depends on H159, which acts as the Proton donor/acceptor. H160 contributes to the (S)-2,3,4,5-tetrahydrodipicolinate binding site. K163 acts as the Proton donor in catalysis. 169–170 (GT) lines the (S)-2,3,4,5-tetrahydrodipicolinate pocket.

Belongs to the DapB family. Homotetramer.

It localises to the cytoplasm. The catalysed reaction is (S)-2,3,4,5-tetrahydrodipicolinate + NAD(+) + H2O = (2S,4S)-4-hydroxy-2,3,4,5-tetrahydrodipicolinate + NADH + H(+). It carries out the reaction (S)-2,3,4,5-tetrahydrodipicolinate + NADP(+) + H2O = (2S,4S)-4-hydroxy-2,3,4,5-tetrahydrodipicolinate + NADPH + H(+). Its pathway is amino-acid biosynthesis; L-lysine biosynthesis via DAP pathway; (S)-tetrahydrodipicolinate from L-aspartate: step 4/4. Catalyzes the conversion of 4-hydroxy-tetrahydrodipicolinate (HTPA) to tetrahydrodipicolinate. This chain is 4-hydroxy-tetrahydrodipicolinate reductase, found in Salmonella gallinarum (strain 287/91 / NCTC 13346).